The primary structure comprises 388 residues: Arginine biosynthesis bifunctional protein ArgJ (388 aa).

6 residues coordinate substrate: Thr150, Lys172, Thr183, Glu263, Asn383, and Ser388. Residue Thr183 is the Nucleophile of the active site.

Belongs to the ArgJ family. In terms of assembly, heterotetramer of two alpha and two beta chains.

The protein localises to the cytoplasm. The catalysed reaction is N(2)-acetyl-L-ornithine + L-glutamate = N-acetyl-L-glutamate + L-ornithine. It catalyses the reaction L-glutamate + acetyl-CoA = N-acetyl-L-glutamate + CoA + H(+). Its pathway is amino-acid biosynthesis; L-arginine biosynthesis; L-ornithine and N-acetyl-L-glutamate from L-glutamate and N(2)-acetyl-L-ornithine (cyclic): step 1/1. The protein operates within amino-acid biosynthesis; L-arginine biosynthesis; N(2)-acetyl-L-ornithine from L-glutamate: step 1/4. Functionally, catalyzes two activities which are involved in the cyclic version of arginine biosynthesis: the synthesis of N-acetylglutamate from glutamate and acetyl-CoA as the acetyl donor, and of ornithine by transacetylation between N(2)-acetylornithine and glutamate. The polypeptide is Arginine biosynthesis bifunctional protein ArgJ (Corynebacterium glutamicum (strain ATCC 13032 / DSM 20300 / JCM 1318 / BCRC 11384 / CCUG 27702 / LMG 3730 / NBRC 12168 / NCIMB 10025 / NRRL B-2784 / 534)).